Here is a 204-residue protein sequence, read N- to C-terminus: Urease accessory protein UreG (204 aa).

11–18 contacts GTP; that stretch reads GPVGAGKT.

This sequence belongs to the SIMIBI class G3E GTPase family. UreG subfamily. As to quaternary structure, homodimer. UreD, UreF and UreG form a complex that acts as a GTP-hydrolysis-dependent molecular chaperone, activating the urease apoprotein by helping to assemble the nickel containing metallocenter of UreC. The UreE protein probably delivers the nickel.

The protein resides in the cytoplasm. Its function is as follows. Facilitates the functional incorporation of the urease nickel metallocenter. This process requires GTP hydrolysis, probably effectuated by UreG. The protein is Urease accessory protein UreG of Staphylococcus aureus (strain bovine RF122 / ET3-1).